We begin with the raw amino-acid sequence, 305 residues long: MVLYPPDDPFLISFTLFGLPIVVRWYGAIIMTGALIAALLASRRAVARGYHPDHVWNQLMLGLVLGIAGARIYYVAFEWERFAPNPWSVFNLTTGGIAIHGAIIGALLSTVIYTRYAGLPYWDWLDVCVPGFLLAQSIGRWGNFFNQEAYGRPTDLPFGLRIDPEYRVPPYNDLTTYPITTLFHPTFLYESVWNLVGVGILLWLDRRFGRLAPPERRRLNPGDLLFLYGIIYSSGRFWIEGLRIDSLCANGVGGSCEGSIRVAQLVSMVAIVVCGVLIFLNHRRPFAGTPTVRPDGDASPVSEAR.

3 consecutive transmembrane segments (helical) span residues 10–30 (FLISFTLFGLPIVVRWYGAII), 59–79 (LMLGLVLGIAGARIYYVAFEW), and 92–112 (LTTGGIAIHGAIIGALLSTVI). Arg140 lines the a 1,2-diacyl-sn-glycero-3-phospho-(1'-sn-glycerol) pocket. 2 helical membrane-spanning segments follow: residues 182-202 (LFHPTFLYESVWNLVGVGILL) and 260-280 (IRVAQLVSMVAIVVCGVLIFL).

It belongs to the Lgt family.

The protein localises to the cell membrane. It carries out the reaction L-cysteinyl-[prolipoprotein] + a 1,2-diacyl-sn-glycero-3-phospho-(1'-sn-glycerol) = an S-1,2-diacyl-sn-glyceryl-L-cysteinyl-[prolipoprotein] + sn-glycerol 1-phosphate + H(+). The protein operates within protein modification; lipoprotein biosynthesis (diacylglyceryl transfer). Catalyzes the transfer of the diacylglyceryl group from phosphatidylglycerol to the sulfhydryl group of the N-terminal cysteine of a prolipoprotein, the first step in the formation of mature lipoproteins. The sequence is that of Phosphatidylglycerol--prolipoprotein diacylglyceryl transferase from Chloroflexus aggregans (strain MD-66 / DSM 9485).